We begin with the raw amino-acid sequence, 229 residues long: Phosphoglycolate phosphatase (229 aa).

The Nucleophile role is filled by Asp-18. Residues Asp-18, Asp-20, and Asp-176 each contribute to the Mg(2+) site.

Belongs to the HAD-like hydrolase superfamily. CbbY/CbbZ/Gph/YieH family. It depends on Mg(2+) as a cofactor.

The enzyme catalyses 2-phosphoglycolate + H2O = glycolate + phosphate. It functions in the pathway organic acid metabolism; glycolate biosynthesis; glycolate from 2-phosphoglycolate: step 1/1. In terms of biological role, specifically catalyzes the dephosphorylation of 2-phosphoglycolate. Is involved in the dissimilation of the intracellular 2-phosphoglycolate formed during the DNA repair of 3'-phosphoglycolate ends, a major class of DNA lesions induced by oxidative stress. The protein is Phosphoglycolate phosphatase of Xylella fastidiosa (strain 9a5c).